The primary structure comprises 105 residues: Met repressor (105 aa).

Belongs to the MetJ family. Homodimer.

Its subcellular location is the cytoplasm. Its function is as follows. This regulatory protein, when combined with SAM (S-adenosylmethionine) represses the expression of the methionine regulon and of enzymes involved in SAM synthesis. The sequence is that of Met repressor from Actinobacillus succinogenes (strain ATCC 55618 / DSM 22257 / CCUG 43843 / 130Z).